The sequence spans 122 residues: Large ribosomal subunit protein uL14 (122 aa).

It belongs to the universal ribosomal protein uL14 family. As to quaternary structure, part of the 50S ribosomal subunit. Forms a cluster with proteins L3 and L19. In the 70S ribosome, L14 and L19 interact and together make contacts with the 16S rRNA in bridges B5 and B8.

Binds to 23S rRNA. Forms part of two intersubunit bridges in the 70S ribosome. The chain is Large ribosomal subunit protein uL14 from Synechococcus sp. (strain JA-2-3B'a(2-13)) (Cyanobacteria bacterium Yellowstone B-Prime).